Here is a 173-residue protein sequence, read N- to C-terminus: Membrane-bound hydrogenase subunit beta (173 aa).

The protein belongs to the complex I 30 kDa subunit family. As to quaternary structure, the membrane-bound hydrogenase complex is composed of MbhK and MbhL, and may also contain MbhJ. Ni(2+) is required as a cofactor.

It is found in the cell membrane. It carries out the reaction H2 + 2 oxidized [2Fe-2S]-[ferredoxin] = 2 reduced [2Fe-2S]-[ferredoxin] + 2 H(+). Its activity is regulated as follows. Inhibited by 0.1 mM Cu(2+). In terms of biological role, beta subunit of a hydrogen-evolving hydrogenase that utilizes protons both as a substrate for hydrogen production and proton translocation. Acts by coupling the redox reaction via ferredoxin and iron-sulfur (Fe-S) clusters to proton translocation across the membrane thereby conserving the redox energy in a proton gradient. The chain is Membrane-bound hydrogenase subunit beta from Pyrococcus furiosus (strain ATCC 43587 / DSM 3638 / JCM 8422 / Vc1).